The primary structure comprises 400 residues: Argininosuccinate synthase (400 aa).

8-16 (AYSGGLDTS) is an ATP binding site. An L-citrulline-binding site is contributed by tyrosine 87. Glycine 117 contributes to the ATP binding site. Threonine 119, asparagine 123, and aspartate 124 together coordinate L-aspartate. Asparagine 123 provides a ligand contact to L-citrulline. The L-citrulline site is built by arginine 127, serine 175, glutamate 260, and tyrosine 272.

Belongs to the argininosuccinate synthase family. Type 1 subfamily. Homotetramer.

The protein resides in the cytoplasm. It carries out the reaction L-citrulline + L-aspartate + ATP = 2-(N(omega)-L-arginino)succinate + AMP + diphosphate + H(+). The protein operates within amino-acid biosynthesis; L-arginine biosynthesis; L-arginine from L-ornithine and carbamoyl phosphate: step 2/3. The protein is Argininosuccinate synthase of Mycobacterium sp. (strain JLS).